We begin with the raw amino-acid sequence, 525 residues long: Erythropoietin receptor (525 aa).

An N-terminal signal peptide occupies residues 1-32 (MGAPSSLLFSTAHWRTVPFLLAFWVLLSTGTA). Over 33–249 (EDPTMTPEFL…TIATIIDLRL (217 aa)) the chain is Extracellular. The cysteines at positions 58 and 68 are disulfide-linked. 4 N-linked (GlcNAc...) asparagine glycosylation sites follow: Asn-77, Asn-100, Asn-149, and Asn-185. An intrachain disulfide couples Cys-91 to Cys-107. One can recognise a Fibronectin type-III domain in the interval 146-246 (PPLNVTVKEK…APITIATIID (101 aa)). A WSXWS motif motif is present at residues 232 to 236 (WSDWT). The helical transmembrane segment at 250 to 270 (LLLLSIAIFVALIAGVGVYIF) threads the bilayer. Residues 271–525 (MRHGMYLKHK…NFLAPIYSQS (255 aa)) are Cytoplasmic-facing. The short motif at 281 to 289 (VWPQVPTPE) is the Box 1 motif element. 2 disordered regions span residues 434-459 (APRM…QSIP) and 492-513 (LDMS…QNSP). Positions 447–459 (ENSVSSDGKQSIP) are enriched in polar residues. Positions 487-492 (LKYAYL) match the ITIM motif motif.

The protein belongs to the type I cytokine receptor family. Type 1 subfamily. In terms of tissue distribution, expressed in the ventral blood island from stage 28 through to stage 36. Expressed in the circulating blood by stage 40. In the adult, highly expressed in peripheral blood cells including immature erythrocytes and basophils, and moderately expressed in the hematopoietic organs: liver, kidney and spleen. Expressed at a low level in adult brain.

The protein resides in the cell membrane. In terms of biological role, receptor for erythropoietin. Mediates erythropoietin-induced erythroblast proliferation and differentiation. The chain is Erythropoietin receptor from Xenopus laevis (African clawed frog).